The sequence spans 145 residues: MTMVNIINGPNLGRLGRREPDVYGSTTHEQLSALIERAAVEFGIKAVVRQSDSESQLLDWIHLAADAGEPVILNAGGLTHTSVALRDACAELSAPFIEVHISNVHAREEFRRHSYLSPLATGVITGLGVQGYLLALRYLAEIAGN.

The Proton acceptor role is filled by Tyr-23. Substrate is bound by residues Asn-74, His-80, and Asp-87. His-100 acts as the Proton donor in catalysis. Substrate-binding positions include Ile-101–Ser-102 and Arg-111.

This sequence belongs to the type-II 3-dehydroquinase family. Homododecamer.

The catalysed reaction is 3-dehydroquinate = 3-dehydroshikimate + H2O. It functions in the pathway metabolic intermediate biosynthesis; chorismate biosynthesis; chorismate from D-erythrose 4-phosphate and phosphoenolpyruvate: step 3/7. Functionally, catalyzes a trans-dehydration via an enolate intermediate. The polypeptide is 3-dehydroquinate dehydratase (Mycobacterium leprae (strain Br4923)).